The following is a 97-amino-acid chain: DNA-directed RNA polymerase subunit omega (97 aa).

This sequence belongs to the RNA polymerase subunit omega family. The RNAP catalytic core consists of 2 alpha, 1 beta, 1 beta' and 1 omega subunit. When a sigma factor is associated with the core the holoenzyme is formed, which can initiate transcription.

It carries out the reaction RNA(n) + a ribonucleoside 5'-triphosphate = RNA(n+1) + diphosphate. Its function is as follows. Promotes RNA polymerase assembly. Latches the N- and C-terminal regions of the beta' subunit thereby facilitating its interaction with the beta and alpha subunits. This Coxiella burnetii (strain CbuK_Q154) (Coxiella burnetii (strain Q154)) protein is DNA-directed RNA polymerase subunit omega.